The primary structure comprises 50 residues: Bacterioferritin (50 aa).

Residues 1-50 (MKGDPKVIDYLNKALRHELTAINQYWLHYRLLDNWGIKDLAKKWRAESIE) enclose the Ferritin-like diiron domain. Residue E18 participates in Fe cation binding.

This sequence belongs to the bacterioferritin family. Homooligomer of 24 subunits, arranged as 12 dimers, that are packed together to form an approximately spherical molecule with a central cavity, in which large amounts of iron can be deposited. Heme b is required as a cofactor.

It catalyses the reaction 4 Fe(2+) + O2 + 4 H(+) = 4 Fe(3+) + 2 H2O. The enzyme catalyses Fe(2+)(in) = Fe(2+)(out). Functionally, iron-storage protein, whose ferroxidase center binds Fe(2+), oxidizes it using dioxygen to Fe(3+), and participates in the subsequent Fe(3+) oxide mineral core formation within the central cavity of the BFR protein shell. In terms of biological role, may act as one of the electron carriers in the reverse electron-transport system from cytochrome c-552 to NADP(+). The chain is Bacterioferritin (bfr) from Nitrobacter winogradskyi (Nitrobacter agilis).